A 98-amino-acid polypeptide reads, in one-letter code: Phosphoribosyl-ATP pyrophosphatase (98 aa).

The protein belongs to the PRA-PH family.

Its subcellular location is the cytoplasm. It carries out the reaction 1-(5-phospho-beta-D-ribosyl)-ATP + H2O = 1-(5-phospho-beta-D-ribosyl)-5'-AMP + diphosphate + H(+). It functions in the pathway amino-acid biosynthesis; L-histidine biosynthesis; L-histidine from 5-phospho-alpha-D-ribose 1-diphosphate: step 2/9. This chain is Phosphoribosyl-ATP pyrophosphatase, found in Haloarcula marismortui (strain ATCC 43049 / DSM 3752 / JCM 8966 / VKM B-1809) (Halobacterium marismortui).